Consider the following 234-residue polypeptide: 3-deoxy-manno-octulosonate cytidylyltransferase (234 aa).

Belongs to the KdsB family.

Its subcellular location is the cytoplasm. The catalysed reaction is 3-deoxy-alpha-D-manno-oct-2-ulosonate + CTP = CMP-3-deoxy-beta-D-manno-octulosonate + diphosphate. Its pathway is nucleotide-sugar biosynthesis; CMP-3-deoxy-D-manno-octulosonate biosynthesis; CMP-3-deoxy-D-manno-octulosonate from 3-deoxy-D-manno-octulosonate and CTP: step 1/1. It participates in bacterial outer membrane biogenesis; lipopolysaccharide biosynthesis. In terms of biological role, activates KDO (a required 8-carbon sugar) for incorporation into bacterial lipopolysaccharide in Gram-negative bacteria. This Aquifex aeolicus (strain VF5) protein is 3-deoxy-manno-octulosonate cytidylyltransferase.